The following is a 69-amino-acid chain: MVVNLILLLGLLGGYLLVMPAITYFYLQKRWYVASSLERGFMYFLVFFFFPSLLLLSPFLNFRPQPRKI.

Helical transmembrane passes span 5-25 (LILL…ITYF) and 40-60 (GFMY…SPFL).

This sequence belongs to the complex I NdhL subunit family. In terms of assembly, NDH-1 can be composed of about 15 different subunits; different subcomplexes with different compositions have been identified which probably have different functions.

The protein localises to the cellular thylakoid membrane. It catalyses the reaction a plastoquinone + NADH + (n+1) H(+)(in) = a plastoquinol + NAD(+) + n H(+)(out). The catalysed reaction is a plastoquinone + NADPH + (n+1) H(+)(in) = a plastoquinol + NADP(+) + n H(+)(out). NDH-1 shuttles electrons from an unknown electron donor, via FMN and iron-sulfur (Fe-S) centers, to quinones in the respiratory and/or the photosynthetic chain. The immediate electron acceptor for the enzyme in this species is believed to be plastoquinone. Couples the redox reaction to proton translocation, and thus conserves the redox energy in a proton gradient. Cyanobacterial NDH-1 also plays a role in inorganic carbon-concentration. The chain is NAD(P)H-quinone oxidoreductase subunit L from Acaryochloris marina (strain MBIC 11017).